Reading from the N-terminus, the 299-residue chain is pH-regulated antigen PRA1 (299 aa).

The signal sequence occupies residues 1 to 15; that stretch reads MNYLLFCLFFAFSVA. N-linked (GlcNAc...) asparagine glycosylation is found at asparagine 48, asparagine 89, asparagine 135, and asparagine 208. Positions 253–299 are disordered; sequence FEDSDSGSDSGASSTASSSHQHTDSNPSATTDANSHCHTHADGEVHC. Residues 259–272 show a composition bias toward low complexity; it reads GSDSGASSTASSSH. Polar residues predominate over residues 278-288; it reads NPSATTDANSH.

This sequence belongs to the ZPS1 family. In terms of assembly, component of a multiprotein complex of 250 kDa composed of at least HYR1, MP65, and PRA1. Interacts with host Integrin alpha-M/beta-2 heterodimer. Also binds human factor H (CFH), CFHR1, plasminogen (PLG), complement C3, and C4BPA. Interacts with ZRT101. Post-translationally, N- and O-glycosylated. The N- and 0-glycosidically linked carbohydrates represent 18 to 20 percent and 3 to 4 percent, respectively, of the molecular mass of PRA1. 0-linked sugar residues may be involved in the interaction with fibrinogen. Contributes highly to the carbohydrate component of the matrix. Treatment with tunicamycin impairs glycosylation.

It localises to the secreted. In terms of biological role, cell surface protein involved in the host-parasite interaction during candidal infection. With MP65, represents a major component of the biofilm matrix. As a surface protein, binds the two human complement regulators CFH and CFHR1, as well as plasminogen PLG, mediates complement evasion and extra-cellular matrix interaction and/or degradation. As a released protein, enhances complement control in direct vicinity of the yeast and thus generates an additional protective layer which controls host complement attack, assisting the fungus in escaping host surveillance. Binds to host fluid-phase C3 and blocks cleavage of C3 to C3a and C3b, leading to inhibition of complement activation and protection from uptake of C.albicans by human macrophages. Also mediates human complement control and complement evasion through binding to C4BPA, another human complement inhibitor, as well as through binding to host integrin alpha-M/beta-2. Binds zinc from its environment and then reassociates with ZRT1 to acquire this essential metal. The sequence is that of pH-regulated antigen PRA1 from Candida albicans (strain SC5314 / ATCC MYA-2876) (Yeast).